A 308-amino-acid polypeptide reads, in one-letter code: Aspartate carbamoyltransferase catalytic subunit (308 aa).

Residues Arg57 and Thr58 each coordinate carbamoyl phosphate. Lys86 contacts L-aspartate. The carbamoyl phosphate site is built by Arg107, His135, and Gln138. L-aspartate is bound by residues Arg167 and Arg228. 2 residues coordinate carbamoyl phosphate: Leu267 and Pro268.

This sequence belongs to the aspartate/ornithine carbamoyltransferase superfamily. ATCase family. In terms of assembly, heterooligomer of catalytic and regulatory chains.

The enzyme catalyses carbamoyl phosphate + L-aspartate = N-carbamoyl-L-aspartate + phosphate + H(+). The protein operates within pyrimidine metabolism; UMP biosynthesis via de novo pathway; (S)-dihydroorotate from bicarbonate: step 2/3. Its function is as follows. Catalyzes the condensation of carbamoyl phosphate and aspartate to form carbamoyl aspartate and inorganic phosphate, the committed step in the de novo pyrimidine nucleotide biosynthesis pathway. The sequence is that of Aspartate carbamoyltransferase catalytic subunit from Methanosarcina barkeri (strain Fusaro / DSM 804).